The following is a 101-amino-acid chain: Small ribosomal subunit protein uS14 (101 aa).

Belongs to the universal ribosomal protein uS14 family. As to quaternary structure, part of the 30S ribosomal subunit. Contacts proteins S3 and S10.

Functionally, binds 16S rRNA, required for the assembly of 30S particles and may also be responsible for determining the conformation of the 16S rRNA at the A site. In Actinobacillus succinogenes (strain ATCC 55618 / DSM 22257 / CCUG 43843 / 130Z), this protein is Small ribosomal subunit protein uS14.